Consider the following 246-residue polypeptide: 14-3-3 protein eta (246 aa).

Glycine 2 bears the N-acetylglycine mark. Phosphoserine occurs at positions 25 and 59.

It belongs to the 14-3-3 family. In terms of assembly, homodimer. Interacts with many nuclear hormone receptors and cofactors including AR, ESR1, ESR2, MC2R, NR3C1, NRIP1, PPARBP and THRA. Interacts with ABL1 (phosphorylated form); the interaction retains it in the cytoplasm. Weakly interacts with CDKN1B. Interacts with ARHGEF28 and CDK16. Interacts with GAB2. Interacts with KCNK18 in a phosphorylation-dependent manner. Interacts with SAMSN1. Interacts with the 'Ser-241' phosphorylated form of PDPK1. Interacts with the 'Thr-369' phosphorylated form of DAPK2. Interacts with PI4KB, TBC1D22A and TBC1D22B. Interacts with SLITRK1. Interacts with MEFV. Phosphorylated on Ser-59 by protein kinase C delta type catalytic subunit in a sphingosine-dependent fashion.

It localises to the cytoplasm. In terms of biological role, adapter protein implicated in the regulation of a large spectrum of both general and specialized signaling pathways. Binds to a large number of partners, usually by recognition of a phosphoserine or phosphothreonine motif. Binding generally results in the modulation of the activity of the binding partner. Negatively regulates the kinase activity of PDPK1. The polypeptide is 14-3-3 protein eta (YWHAH) (Bos taurus (Bovine)).